The primary structure comprises 450 residues: MSSRTSTSSYKRMFGAERQAMVRSTYSSRQYSSPGRTTSRVSYSSASSTSPSLYMSKSARSATRLATETLDFGLADAINTEFKANRTNEKAEMQHVNDRFASYIEEVRFLEQQNKILTAELEQMRGKGSSRVGDLYEDEMRELRRQVDQLINEKASVEVDRDNLGENIERLRQKLQEEMLQREDAENSLRSFRQDVDNASLARLDLERKVESLQEEIAFLKKLHDEELAELQMQIQERHVQIDMEVAKPDLTAALRDVRQQYETLASRNLQESEEWYKSKFADLSEAATRNSEAVRLAKHEANDYRRQLQSLTCDLEALRGTNGSLERQMREMEDNFSIEASGYQDTIVRLEDDIRNTKDEMARHLREYQNLLNVKMALDIEIATYRNLLEGEEYRITTPFPNLSSLSLRESMKEIRPAMDSLSKKVVIKTIETRDGHIINQSTQKDNLE.

The segment at Met1–Glu81 is head. Polar residues predominate over residues Ser24 to Thr38. The disordered stretch occupies residues Ser24–Ser56. The segment covering Ser39–Ser56 has biased composition (low complexity). The interval Phe82–Leu117 is coil 1A. In terms of domain architecture, IF rod spans Glu89–Ile397. The segment at Thr118–Glu139 is linker 1. A coil 1B region spans residues Met140–Leu231. Residues Gln232–Ala254 form a linker 12 region. Positions Leu255–Glu393 are coil 2. The segment at Glu394 to Glu450 is tail.

This sequence belongs to the intermediate filament family. In terms of assembly, homomer. In terms of processing, one of the most prominent phosphoproteins in various cells of mesenchymal origin. Phosphorylation is enhanced during cell division, at which time vimentin filaments are significantly reorganized. Expressed in low amounts in retina, optic nerve, brain, and spinal cord and in very high amounts in eye lens.

In terms of biological role, vimentins are class-III intermediate filaments found in various non-epithelial cells, especially mesenchymal cells. Vimentin is attached to the nucleus, endoplasmic reticulum, and mitochondria, either laterally or terminally. The polypeptide is Vimentin beta (Carassius auratus (Goldfish)).